We begin with the raw amino-acid sequence, 561 residues long: ATP-dependent rRNA helicase RRP3 (561 aa).

Composition is skewed to low complexity over residues 1–23 (MPKA…SSNS) and 30–45 (ASSP…PSTS). Positions 1 to 109 (MPKASASSAK…DEKKVATIAD (109 aa)) are disordered. The segment covering 100–109 (DEKKVATIAD) has biased composition (basic and acidic residues). A Q motif motif is present at residues 114–142 (VEFSDLGVIPQIVEACTNMGFKHPTPIQV). A Helicase ATP-binding domain is found at 145–316 (IPEALQARDV…RASLKNPVRV (172 aa)). 158–165 (AQTGSGKT) lines the ATP pocket. The DEAD box signature appears at 264–267 (DEAD). Residues 339–487 (HKDTYLVHLA…EFPGGNDKEA (149 aa)) form the Helicase C-terminal domain. Residues 506–561 (LKDKGVGSAGGSGKRKRKMDGKYGDDMDRDDDQVQAGLPVSGNGRHQNQNRKKGRR) are disordered.

The protein belongs to the DEAD box helicase family. DDX47/RRP3 subfamily. Interacts with the SSU processome.

Its subcellular location is the nucleus. It carries out the reaction ATP + H2O = ADP + phosphate + H(+). ATP-dependent rRNA helicase required for pre-ribosomal RNA processing. Involved in the maturation of the 35S-pre-rRNA and to its cleavage to mature 18S rRNA. This chain is ATP-dependent rRNA helicase RRP3, found in Mycosarcoma maydis (Corn smut fungus).